Consider the following 728-residue polypeptide: Pre-mRNA-splicing ATP-dependent RNA helicase prp-28 (728 aa).

The segment at 19-155 (KKEEEAAAAK…NDEAELRARY (137 aa)) is disordered. 3 stretches are compositionally biased toward basic and acidic residues: residues 33-59 (PKKERERLEAEKKAKEEEERKRKEEAK), 109-125 (RDYRDNRDNRDNRDRNQ), and 137-153 (EEKRAKMERNDEAELRA). Positions 293–321 (RSWEESTLPRRLLDIVKNVGYDEPTPIQR) match the Q motif motif. The Helicase ATP-binding domain maps to 324–527 (IPIALQARDL…KKYLRRPAIV (204 aa)). Position 337–344 (337–344 (AVTGSGKT)) interacts with ATP. The DEAD box signature appears at 450–453 (DEAD). Residues 538 to 701 (TVEQRVEFVS…KVPDELRRHE (164 aa)) form the Helicase C-terminal domain. Residues 692–728 (KVPDELRRHEAAQNKPQKGQKKLEESNGYSGKGGSWN) form a disordered region. Residues 693–703 (VPDELRRHEAA) show a composition bias toward basic and acidic residues.

This sequence belongs to the DEAD box helicase family. DDX23/PRP28 subfamily. As to quaternary structure, component of the U5 snRNP complex.

The protein localises to the cytoplasm. It is found in the nucleus. It carries out the reaction ATP + H2O = ADP + phosphate + H(+). Its function is as follows. ATP-dependent RNA helicase involved in mRNA splicing. May destabilize the U1/5'-splice site duplex to permit an effective competition for the 5'-splice site by the U6 snRNA, resulting in the switch between U1 and U6 at the 5'-splice site. May also act to unwind the U4/U6 base-pairing interaction in the U4/U6/U5 snRNP, facilitating the first covalent step of splicing. This chain is Pre-mRNA-splicing ATP-dependent RNA helicase prp-28 (prp-28), found in Neurospora crassa (strain ATCC 24698 / 74-OR23-1A / CBS 708.71 / DSM 1257 / FGSC 987).